Here is a 76-residue protein sequence, read N- to C-terminus: Exodeoxyribonuclease 7 small subunit (76 aa).

Belongs to the XseB family. As to quaternary structure, heterooligomer composed of large and small subunits.

It is found in the cytoplasm. The enzyme catalyses Exonucleolytic cleavage in either 5'- to 3'- or 3'- to 5'-direction to yield nucleoside 5'-phosphates.. Its function is as follows. Bidirectionally degrades single-stranded DNA into large acid-insoluble oligonucleotides, which are then degraded further into small acid-soluble oligonucleotides. This is Exodeoxyribonuclease 7 small subunit from Bacillus cytotoxicus (strain DSM 22905 / CIP 110041 / 391-98 / NVH 391-98).